The following is a 272-amino-acid chain: Phosphatidylglycerol--prolipoprotein diacylglyceryl transferase (272 aa).

The next 4 helical transmembrane spans lie at 24–44, 59–79, 102–122, and 129–149; these read WYGIAYVLALLVALWVAKWIA, YFIWVEVGVILGARLGYILFY, FIGIRGMSYHGAVIGFLIASF, and GVKFWMLMDLVGISVPLGYVF. A 1,2-diacyl-sn-glycero-3-phospho-(1'-sn-glycerol) is bound at residue Arg151. The next 3 membrane-spanning stretches (helical) occupy residues 180–200, 208–228, and 244–264; these read PSQLYEAFLEGIVLFVILYAW, GQLGIMYLILYALARFVAEFW, and MGQLLSLAMAIPCLVLWGYLA.

Belongs to the Lgt family.

The protein resides in the cell inner membrane. The catalysed reaction is L-cysteinyl-[prolipoprotein] + a 1,2-diacyl-sn-glycero-3-phospho-(1'-sn-glycerol) = an S-1,2-diacyl-sn-glyceryl-L-cysteinyl-[prolipoprotein] + sn-glycerol 1-phosphate + H(+). It functions in the pathway protein modification; lipoprotein biosynthesis (diacylglyceryl transfer). Catalyzes the transfer of the diacylglyceryl group from phosphatidylglycerol to the sulfhydryl group of the N-terminal cysteine of a prolipoprotein, the first step in the formation of mature lipoproteins. The protein is Phosphatidylglycerol--prolipoprotein diacylglyceryl transferase of Wolinella succinogenes (strain ATCC 29543 / DSM 1740 / CCUG 13145 / JCM 31913 / LMG 7466 / NCTC 11488 / FDC 602W) (Vibrio succinogenes).